The sequence spans 290 residues: BEL1-like homeodomain protein 11 (290 aa).

The segment at 20-36 (SRYAKAVQCLVEEVIDI) is SR/KY domain. A BELL domain region spans residues 81–152 (ENHEIHIKIT…SLEEAIISQL (72 aa)). Positions 202-264 (AWKPIRGLPE…NARVRLWKPM (63 aa)) form a DNA-binding region, homeobox.

This sequence belongs to the TALE/BELL homeobox family. As to quaternary structure, may form heterodimeric complexes with TALE/KNOX proteins.

Its subcellular location is the nucleus. This Arabidopsis thaliana (Mouse-ear cress) protein is BEL1-like homeodomain protein 11 (BLH11).